We begin with the raw amino-acid sequence, 85 residues long: Large ribosomal subunit protein bL31B (85 aa).

This sequence belongs to the bacterial ribosomal protein bL31 family. Type B subfamily. In terms of assembly, part of the 50S ribosomal subunit.

In Pseudarthrobacter chlorophenolicus (strain ATCC 700700 / DSM 12829 / CIP 107037 / JCM 12360 / KCTC 9906 / NCIMB 13794 / A6) (Arthrobacter chlorophenolicus), this protein is Large ribosomal subunit protein bL31B.